The chain runs to 139 residues: Protein archease (139 aa).

Ca(2+) contacts are provided by D12, D138, and I139.

This sequence belongs to the archease family.

Functionally, activates the tRNA-splicing ligase complex by facilitating the enzymatic turnover of catalytic subunit RtcB. Acts by promoting the guanylylation of RtcB, a key intermediate step in tRNA ligation. Can also alter the NTP specificity of RtcB such that ATP, dGTP or ITP is used efficiently. This Sulfolobus acidocaldarius (strain ATCC 33909 / DSM 639 / JCM 8929 / NBRC 15157 / NCIMB 11770) protein is Protein archease.